The chain runs to 385 residues: Mannitol-1-phosphate 5-dehydrogenase (385 aa).

Position 3–14 (3–14) interacts with NAD(+); sequence ALHFGAGNIGRG.

The protein belongs to the mannitol dehydrogenase family.

It carries out the reaction D-mannitol 1-phosphate + NAD(+) = beta-D-fructose 6-phosphate + NADH + H(+). The sequence is that of Mannitol-1-phosphate 5-dehydrogenase from Pasteurella multocida (strain Pm70).